The sequence spans 132 residues: Interleukin-13 (132 aa).

An N-terminal signal peptide occupies residues 1–18 (MALLLTTVIALTCLGGFA). Asn38, Asn49, Asn57, and Asn72 each carry an N-linked (GlcNAc...) asparagine glycan. Cystine bridges form between Cys48/Cys76 and Cys64/Cys90.

It belongs to the IL-4/IL-13 family. In terms of assembly, interacts with IL13RA2.

Its subcellular location is the secreted. In terms of biological role, cytokine that plays important roles in allergic inflammation and immune response to parasite infection. Synergizes with IL2 in regulating interferon-gamma synthesis. Stimulates B-cell proliferation, and activation of eosinophils, basophils, and mast cells. Plays an important role in controlling IL33 activity by modulating the production of transmembrane and soluble forms of interleukin-1 receptor-like 1/IL1RL1. Displays the capacity to antagonize Th1-driven proinflammatory immune response and downregulates synthesis of many proinflammatory cytokines including IL1, IL6, IL10, IL12 and TNF-alpha through a mechanism that partially involves suppression of NF-kappa-B. Also functions on nonhematopoietic cells, including endothelial cells where it induces vascular cell adhesion protein 1/VCAM1, which is important in the recruitment of eosinophils. Exerts its biological effects through its receptors which comprises the IL4R chain and the IL13RA1 chain, to activate JAK1 and TYK2, leading to the activation of STAT6. Aside from IL13RA1, another receptor IL13RA2 acts as a high affinity decoy for IL13 and mediates internalization and depletion of extracellular IL13. The polypeptide is Interleukin-13 (IL13) (Pan troglodytes (Chimpanzee)).